The chain runs to 212 residues: Peptide methionine sulfoxide reductase MsrA (212 aa).

The active site involves C52.

This sequence belongs to the MsrA Met sulfoxide reductase family.

The catalysed reaction is L-methionyl-[protein] + [thioredoxin]-disulfide + H2O = L-methionyl-(S)-S-oxide-[protein] + [thioredoxin]-dithiol. It carries out the reaction [thioredoxin]-disulfide + L-methionine + H2O = L-methionine (S)-S-oxide + [thioredoxin]-dithiol. Has an important function as a repair enzyme for proteins that have been inactivated by oxidation. Catalyzes the reversible oxidation-reduction of methionine sulfoxide in proteins to methionine. The chain is Peptide methionine sulfoxide reductase MsrA from Salmonella schwarzengrund (strain CVM19633).